The sequence spans 293 residues: Formamidopyrimidine-DNA glycosylase (293 aa).

Catalysis depends on proline 2, which acts as the Schiff-base intermediate with DNA. Catalysis depends on glutamate 3, which acts as the Proton donor. Lysine 58 acts as the Proton donor; for beta-elimination activity in catalysis. DNA contacts are provided by histidine 104, arginine 123, and lysine 166. An FPG-type zinc finger spans residues 257 to 293 (AAYDREGERCRTDGCGGAVKRFVQNGRSTFWCSGCQK). Arginine 283 serves as the catalytic Proton donor; for delta-elimination activity.

This sequence belongs to the FPG family. Monomer. It depends on Zn(2+) as a cofactor.

It carries out the reaction Hydrolysis of DNA containing ring-opened 7-methylguanine residues, releasing 2,6-diamino-4-hydroxy-5-(N-methyl)formamidopyrimidine.. It catalyses the reaction 2'-deoxyribonucleotide-(2'-deoxyribose 5'-phosphate)-2'-deoxyribonucleotide-DNA = a 3'-end 2'-deoxyribonucleotide-(2,3-dehydro-2,3-deoxyribose 5'-phosphate)-DNA + a 5'-end 5'-phospho-2'-deoxyribonucleoside-DNA + H(+). Functionally, involved in base excision repair of DNA damaged by oxidation or by mutagenic agents. Acts as a DNA glycosylase that recognizes and removes damaged bases. Has a preference for oxidized purines, such as 7,8-dihydro-8-oxoguanine (8-oxoG). Has AP (apurinic/apyrimidinic) lyase activity and introduces nicks in the DNA strand. Cleaves the DNA backbone by beta-delta elimination to generate a single-strand break at the site of the removed base with both 3'- and 5'-phosphates. The protein is Formamidopyrimidine-DNA glycosylase of Rhodopseudomonas palustris (strain BisB5).